Consider the following 568-residue polypeptide: Calcium-dependent protein kinase 5 (568 aa).

Positions 125–379 (EIDRYKLGKG…VEQVLKHRWF (255 aa)) constitute a Protein kinase domain. Residues 131 to 139 (LGKGSYGNV) and K154 contribute to the ATP site. D245 serves as the catalytic Proton acceptor. Residues 400-408 (KFKEFHKLC) carry the J domain autoinhibitory motif motif. The interval 400–435 (KFKEFHKLCKIKKLAVTCIAYQLNEKDIGKLKKTFE) is j domain. The J domain EF-hand interaction motif motif lies at 409 to 418 (KIKKLAVTCI). EF-hand domains are found at residues 425–460 (KDIG…NDNE), 462–495 (DREL…HSIF), 496–531 (QQDV…SAVQ), and 534–568 (FSKE…GVKE). Ca(2+)-binding residues include D438, N440, D442, E449, D473, D475, N477, E484, D509, D511, D513, E520, D547, N549, D551, and E558.

This sequence belongs to the protein kinase superfamily. Ser/Thr protein kinase family. CDPK subfamily. It depends on Mg(2+) as a cofactor. In terms of processing, may be palmitoylated. Post-translationally, autophosphorylated in vitro.

It is found in the cytoplasm. The protein resides in the cytoplasmic vesicle. The protein localises to the secretory vesicle. It localises to the microneme membrane. Its subcellular location is the cell membrane. It catalyses the reaction L-seryl-[protein] + ATP = O-phospho-L-seryl-[protein] + ADP + H(+). The enzyme catalyses L-threonyl-[protein] + ATP = O-phospho-L-threonyl-[protein] + ADP + H(+). Activated by calcium. Upon calcium binding to the EF-hand domains, the C-terminus of the junction domain (J domain) undergoes a conformational change which results in the dissociation of the pseudo-substrate inhibitory motif from the catalytic domain. This, in turn, may facilitate the autophosphorylation of the activation loop at Thr-285, which leads to the kinase activation. Functionally, calcium-dependent protein kinase which acts as a sensor and effector of intracellular Ca(2+) levels probably in part downstream of cGMP-activated PKG kinase. Plays a central role in host erythrocytes and hepatocytes infection cycles. During the liver stage, involved in sporozoite motility and thus in sporozoite invasion of host hepatocytes, probably together with CDPK1 and CDPK4. Involved in merosome egress from host hepatocytes, probably together with CDPK4. Required for the release of hepatic merozoites from merosomes in the host blood stream. During the asexual blood stage, required for merozoite egress from host erythrocytes by triggering microneme secretion. Phosphorylates transporter NPT1 at late schizont stage. This chain is Calcium-dependent protein kinase 5, found in Plasmodium falciparum (isolate 3D7).